An 821-amino-acid chain; its full sequence is Putative outer membrane usher protein YqiG (821 aa).

The N-terminal stretch at 1 to 20 is a signal peptide; the sequence is MSGNIGANPVIIIGCASAYA. A disulfide bridge connects residues Cys-798 and Cys-817.

Belongs to the fimbrial export usher family.

The protein localises to the cell outer membrane. May be involved in H(2) production during fermentative growth. Involved in the export and assembly of a fimbrial subunit across the outer membrane. The polypeptide is Putative outer membrane usher protein YqiG (yqiG) (Escherichia coli (strain K12)).